The chain runs to 301 residues: GTPase Era (301 aa).

The Era-type G domain occupies 7 to 175 (YCGFIAIVGR…AAIVRKHLPE (169 aa)). The interval 15–22 (GRPNVGKS) is G1. 15 to 22 (GRPNVGKS) is a binding site for GTP. The tract at residues 41 to 45 (QTTRH) is G2. A G3 region spans residues 62-65 (DTPG). Residues 62–66 (DTPGL) and 124–127 (NKVD) contribute to the GTP site. The segment at 124-127 (NKVD) is G4. The G5 stretch occupies residues 154–156 (ISA). A KH type-2 domain is found at 206–283 (LGAELPYSVT…HLELWVKVKS (78 aa)).

It belongs to the TRAFAC class TrmE-Era-EngA-EngB-Septin-like GTPase superfamily. Era GTPase family. Monomer.

It is found in the cytoplasm. It localises to the cell inner membrane. In terms of biological role, an essential GTPase that binds both GDP and GTP, with rapid nucleotide exchange. Plays a role in 16S rRNA processing and 30S ribosomal subunit biogenesis and possibly also in cell cycle regulation and energy metabolism. In Shigella flexneri, this protein is GTPase Era.